The following is a 625-amino-acid chain: E3 ubiquitin-protein ligase synoviolin (625 aa).

The Cytoplasmic portion of the chain corresponds to 1 to 4 (MVRA). A helical transmembrane segment spans residues 5–25 (ALVTATSLALTGAVVAHAYFL). Residues 26 to 40 (KHQFYPTVVYLTKSS) are Lumenal-facing. Residues 41–61 (PSMAVLYIQAFVLVFLLGKLM) traverse the membrane as a helical segment. Residues 62–98 (RKVFFGQLRAAEMEHLIERSWYAVTETCLAFTVFRDD) lie on the Cytoplasmic side of the membrane. The helical transmembrane segment at 99-119 (FSPRFVALFTLLLFLKCFHWL) threads the bilayer. The Lumenal portion of the chain corresponds to 120-135 (AEDRVDFMERSPNISW). The helical transmembrane segment at 136 to 156 (VFHFRVLSLMVLLGVMDFLFV) threads the bilayer. Topologically, residues 157 to 169 (NHACHSIITRGAS) are cytoplasmic. A helical membrane pass occupies residues 170-190 (VQLVFGFEYAILMTMVLTTFI). The Lumenal segment spans residues 191-212 (KYTLHTIDLQSENPWDNKAVYM). Residues 213 to 235 (LYTELFTGFIKVLLYMAFMTIMI) traverse the membrane as a helical segment. The interaction with p53/TP53 stretch occupies residues 236–270 (KVHTFPLFAIRPMYLAMRQFKKAVTDAIMSRRAIR). Over 236–625 (KVHTFPLFAI…GNLLKLASVN (390 aa)) the chain is Cytoplasmic. 8 residues coordinate Zn(2+): C291, C294, C307, H309, H312, C315, C326, and C329. Residues 291 to 330 (CIICREEMVTGAKKLPCNHIFHSSCLRSWFQRQQTCPTCR) form an RING-type; atypical zinc finger. 4 disordered regions span residues 337 to 361 (SQPNQTPAPPAAQAPAPPAPANAPI), 390 to 434 (PPPA…SAAP), 462 to 487 (FMSSMPPPPSSLSSMSEAELRELEQE), and 523 to 625 (LSPP…ASVN). Positions 342-361 (TPAPPAAQAPAPPAPANAPI) are enriched in pro residues. Low complexity predominate over residues 423–434 (AQSTAEAASAAP). The segment covering 462–471 (FMSSMPPPPS) has biased composition (pro residues). The segment covering 523–564 (LSPPRSETNTGETSESANVESSPSTANTETAGQEIQSQSGES) has biased composition (polar residues).

It belongs to the HRD1 family. In terms of assembly, homodimer.

It localises to the endoplasmic reticulum membrane. It catalyses the reaction S-ubiquitinyl-[E2 ubiquitin-conjugating enzyme]-L-cysteine + [acceptor protein]-L-lysine = [E2 ubiquitin-conjugating enzyme]-L-cysteine + N(6)-ubiquitinyl-[acceptor protein]-L-lysine.. It functions in the pathway protein modification; protein ubiquitination. E3 ubiquitin-protein ligase which accepts ubiquitin specifically from endoplasmic reticulum-associated UBC7 E2 ligase and transfers it to substrates, promoting their degradation. Component of the endoplasmic reticulum quality control (ERQC) system also called ER-associated degradation (ERAD) involved in ubiquitin-dependent degradation of misfolded endoplasmic reticulum proteins. Also promotes the degradation of normal but naturally short-lived proteins. Protects cells from ER stress-induced apoptosis. Sequesters p53 in the cytoplasm and promotes its degradation, thereby negatively regulating its biological function in transcription, cell cycle regulation and apoptosis. This chain is E3 ubiquitin-protein ligase synoviolin (syvn1), found in Danio rerio (Zebrafish).